The chain runs to 361 residues: P2Y purinoceptor 4 (361 aa).

The segment at 1–20 is disordered; the sequence is MTSAESLLFTSLGPSPSSGD. The Extracellular portion of the chain corresponds to 1–30; the sequence is MTSAESLLFTSLGPSPSSGDGDCRFNEEFK. The chain crosses the membrane as a helical span at residues 31 to 58; the sequence is FILLPMSYAVVFVLGLALNAPTLWLFLF. The Cytoplasmic portion of the chain corresponds to 59-68; sequence RLRPWDATAT. A helical membrane pass occupies residues 69 to 91; it reads YMFHLALSDTLYVLSLPTLVYYY. Topologically, residues 92–108 are extracellular; sequence AARNHWPFGTGLCKFVR. Cysteines 104 and 181 form a disulfide. The chain crosses the membrane as a helical span at residues 109-127; sequence FLFYWNLYCSVLFLTCISV. At 128 to 149 the chain is on the cytoplasmic side; it reads HRYLGICHPLRAIRWGRPRFAS. A helical transmembrane segment spans residues 150–170; that stretch reads LLCLGVWLVVAGCLVPNLFFV. Residues 171-192 lie on the Extracellular side of the membrane; sequence TTNANGTTILCHDTTLPEEFDH. Asn175 is a glycosylation site (N-linked (GlcNAc...) asparagine). A helical transmembrane segment spans residues 193-218; the sequence is YVYFSSAVMVLLFGLPFLITLVCYGL. Topologically, residues 219 to 242 are cytoplasmic; it reads MARRLYRPLPGAGQSSSRLRSLRT. Residues 243 to 265 form a helical membrane-spanning segment; that stretch reads IAVVLTVFAVCFVPFHITRTIYY. The Extracellular segment spans residues 266–283; the sequence is QARLLQADCHVLNIVNVV. A helical transmembrane segment spans residues 284-305; the sequence is YKVTRPLASANSCLDPVLYLFT. Topologically, residues 306–361 are cytoplasmic; it reads GDKYRNQLQQLCRGSKPKPRTAASSLALVTLHEESISRWADTHQDSTFSAYEGDRL.

The protein belongs to the G-protein coupled receptor 1 family. Post-translationally, phosphorylation of Ser-329 and Ser-330 is a key step in agonist-dependent desensitization and loss of surface P2RY4. This phosphorylation does not involve PKC, nor other calcium-activated kinases. As to expression, widely expressed at low levels. In brain, higher expression in the pineal gland and ventricular system.

It is found in the cell membrane. Functionally, receptor for ATP and UTP coupled to G-proteins that activate a phosphatidylinositol-calcium second messenger system. Not activated by ADP or UDP. The polypeptide is P2Y purinoceptor 4 (P2ry4) (Rattus norvegicus (Rat)).